The primary structure comprises 372 residues: Alanine dehydrogenase 1 (372 aa).

Residue H94 is part of the active site. Residue T170–N200 coordinates NAD(+).

Belongs to the AlaDH/PNT family.

It catalyses the reaction L-alanine + NAD(+) + H2O = pyruvate + NH4(+) + NADH + H(+). Its pathway is amino-acid degradation; L-alanine degradation via dehydrogenase pathway; NH(3) and pyruvate from L-alanine: step 1/1. In terms of biological role, may play a role in cell wall synthesis as L-alanine is an important constituent of the peptidoglycan layer. This is Alanine dehydrogenase 1 (ald1) from Staphylococcus aureus (strain NCTC 8325 / PS 47).